Reading from the N-terminus, the 673-residue chain is ATP-dependent zinc metalloprotease FtsH (673 aa).

Over 1–7 the chain is Cytoplasmic; it reads MNGFFKN. Residues 8 to 28 form a helical membrane-spanning segment; that stretch reads LSLWLVIGLLMVMLFNLFNSP. Over 29-100 the chain is Periplasmic; the sequence is QGPGQSITFS…DVREPEGTPM (72 aa). The chain crosses the membrane as a helical span at residues 101 to 121; the sequence is LMQILISWFPMLLLIAVWIYF. Over 122-673 the chain is Cytoplasmic; sequence MRQMQSGGGR…DTPEGDDKDR (552 aa). 194–201 provides a ligand contact to ATP; sequence GPPGTGKT. His416 contacts Zn(2+). Glu417 is a catalytic residue. Zn(2+) contacts are provided by His420 and Asp492. Residues 601–673 form a disordered region; the sequence is ALKPLKKKDE…DTPEGDDKDR (73 aa). Over residues 648–660 the composition is skewed to polar residues; that stretch reads STRTATEASTQEV. A compositionally biased stretch (basic and acidic residues) spans 661 to 673; it reads VSKDTPEGDDKDR.

This sequence in the central section; belongs to the AAA ATPase family. In the C-terminal section; belongs to the peptidase M41 family. As to quaternary structure, homohexamer. Requires Zn(2+) as cofactor.

The protein localises to the cell inner membrane. Functionally, acts as a processive, ATP-dependent zinc metallopeptidase for both cytoplasmic and membrane proteins. Plays a role in the quality control of integral membrane proteins. The sequence is that of ATP-dependent zinc metalloprotease FtsH from Magnetococcus marinus (strain ATCC BAA-1437 / JCM 17883 / MC-1).